The following is a 400-amino-acid chain: Cysteine desulfurase (400 aa).

Pyridoxal 5'-phosphate contacts are provided by residues 72-73 (GT), asparagine 152, glutamine 180, and 200-202 (SGH). Lysine 203 carries the N6-(pyridoxal phosphate)lysine modification. Pyridoxal 5'-phosphate is bound at residue threonine 238. Residue cysteine 326 is the Cysteine persulfide intermediate of the active site. Cysteine 326 is a binding site for [2Fe-2S] cluster.

Belongs to the class-V pyridoxal-phosphate-dependent aminotransferase family. NifS/IscS subfamily. As to quaternary structure, homodimer. Pyridoxal 5'-phosphate is required as a cofactor.

It catalyses the reaction (sulfur carrier)-H + L-cysteine = (sulfur carrier)-SH + L-alanine. In terms of biological role, catalyzes the removal of elemental sulfur atoms from cysteine to produce alanine. Seems to participate in the biosynthesis of the nitrogenase metalloclusters by providing the inorganic sulfur required for the Fe-S core formation. The sequence is that of Cysteine desulfurase from Gluconacetobacter diazotrophicus (strain ATCC 49037 / DSM 5601 / CCUG 37298 / CIP 103539 / LMG 7603 / PAl5).